The chain runs to 374 residues: Heat stress transcription factor A-8 (374 aa).

A DNA-binding region spans residues 17-112 (VAPFLRKCYD…LLKNVIRRKN (96 aa)). Residues 126 to 192 (TTYAQEKSGL…EMLSFLVMVM (67 aa)) are hydrophobic repeat HR-A/B. Positions 285–294 (DGAWEKLLLL) match the AHA1 motif. A Nuclear localization signal motif is present at residues 298-303 (RKKTKK). An AHA2 motif is present at residues 330-339 (KSYMLKLISE). A Nuclear export signal motif is present at residues 363 to 370 (LTEQMELL).

The protein belongs to the HSF family. Class A subfamily. Homotrimer. Post-translationally, exhibits temperature-dependent phosphorylation.

Its subcellular location is the cytoplasm. The protein resides in the nucleus. In terms of biological role, transcriptional activator that specifically binds DNA sequence 5'-AGAAnnTTCT-3' known as heat shock promoter elements (HSE). The polypeptide is Heat stress transcription factor A-8 (HSFA8) (Arabidopsis thaliana (Mouse-ear cress)).